The primary structure comprises 140 residues: Putative pre-16S rRNA nuclease (140 aa).

This sequence belongs to the YqgF nuclease family.

The protein localises to the cytoplasm. In terms of biological role, could be a nuclease involved in processing of the 5'-end of pre-16S rRNA. This is Putative pre-16S rRNA nuclease from Vibrio vulnificus (strain YJ016).